The following is a 60-amino-acid chain: Large ribosomal subunit protein bL32 (60 aa).

The segment covering 1–19 has biased composition (basic residues); sequence MGVPKRKTSKGRRDKRRAH. The segment at 1–20 is disordered; the sequence is MGVPKRKTSKGRRDKRRAHL.

It belongs to the bacterial ribosomal protein bL32 family.

The protein is Large ribosomal subunit protein bL32 of Syntrophobacter fumaroxidans (strain DSM 10017 / MPOB).